We begin with the raw amino-acid sequence, 89 residues long: Cornifin (89 aa).

Positions 1–29 (MSSQQQKQPCTPPPQLQQQQVKQPCQPPP) are disordered. The residue at position 2 (Ser2) is an N-acetylserine. 8 tandem repeats follow at residues 3 to 14 (SQQQKQPCTPPP), 18 to 29 (QQQVKQPCQPPP), 31 to 38 (EPCIPKTK), 39 to 46 (EPCLPKVP), 47 to 54 (EPCHPKVP), 55 to 62 (EPCQPKVP), 63 to 70 (EPCHPKVP), and 71 to 78 (EPCPSTVT). The 2 X 12 AA approximate repeats stretch occupies residues 3-29 (SQQQKQPCTPPPQLQQQQVKQPCQPPP). The tract at residues 31–78 (EPCIPKTKEPCLPKVPEPCHPKVPEPCQPKVPEPCHPKVPEPCPSTVT) is 6 X 8 AA approximate tandem repeats. Positions 68–89 (KVPEPCPSTVTPAPAQQKTKQK) are disordered. Over residues 75-89 (STVTPAPAQQKTKQK) the composition is skewed to polar residues.

It belongs to the cornifin (SPRR) family.

Its subcellular location is the cytoplasm. Cross-linked envelope protein of keratinocytes. It is a keratinocyte protein that first appears in the cell cytosol, but ultimately becomes cross-linked to membrane proteins by transglutaminase. All that results in the formation of an insoluble envelope beneath the plasma membrane. The protein is Cornifin (SPRR1) of Macaca mulatta (Rhesus macaque).